The chain runs to 436 residues: D-amino acid dehydrogenase (436 aa).

Position 3-17 (3-17 (IVVLGAGVVGVTSAY)) interacts with FAD.

Belongs to the DadA oxidoreductase family. FAD serves as cofactor.

The catalysed reaction is a D-alpha-amino acid + A + H2O = a 2-oxocarboxylate + AH2 + NH4(+). It functions in the pathway amino-acid degradation; D-alanine degradation; NH(3) and pyruvate from D-alanine: step 1/1. Its function is as follows. Oxidative deamination of D-amino acids. In Cereibacter sphaeroides (strain ATCC 17023 / DSM 158 / JCM 6121 / CCUG 31486 / LMG 2827 / NBRC 12203 / NCIMB 8253 / ATH 2.4.1.) (Rhodobacter sphaeroides), this protein is D-amino acid dehydrogenase.